A 1257-amino-acid chain; its full sequence is RAF-like serine/threonine-protein kinase 24 (1257 aa).

A disordered region spans residues 1 to 21 (MDQAKGYEHVRYTAPDPRDEG). The PB1 domain occupies 191–277 (PRDQKLRYVG…EKPRMFLFSS (87 aa)). Composition is skewed to basic and acidic residues over residues 457 to 480 (VQDP…KVND) and 493 to 502 (KEPKMRRESS). 2 disordered regions span residues 457–629 (VQDP…RTSQ) and 761–789 (SQSE…VPQG). Residue Ser474 is modified to Phosphoserine. Residues 533–548 (TQTSSSTPDPSSSTLS) show a composition bias toward low complexity. Residues 550–576 (KSLRKSEDHVENNLSAKEPKMRKEHST) show a composition bias toward basic and acidic residues. Position 555 is a phosphoserine (Ser555). Over residues 583–593 (SVSSVSSDSMV) the composition is skewed to low complexity. Residues 769-782 (ETNTPEHVSQTETS) show a composition bias toward polar residues. Ser777 is modified (phosphoserine). In terms of domain architecture, Protein kinase spans 974 to 1239 (LEELKELGSG…PEIARRLRTM (266 aa)). Residues 980–988 (LGSGTFGTV) and Lys1001 each bind ATP. Position 1013 is a phosphoserine (Ser1013). Catalysis depends on Asp1102, which acts as the Proton acceptor.

Belongs to the protein kinase superfamily. Ser/Thr protein kinase family. Post-translationally, hyperphosphorylated in response to auxin in an ABP1- and TMK1-dependent manner.

It is found in the cytoplasm. It carries out the reaction L-seryl-[protein] + ATP = O-phospho-L-seryl-[protein] + ADP + H(+). The enzyme catalyses L-threonyl-[protein] + ATP = O-phospho-L-threonyl-[protein] + ADP + H(+). With respect to regulation, activated by auxin via rapid phosphorylation downstream of ABP1 and TMK1 signaling. Functionally, RAF-like protein kinase acting, together with RAF20, as a central mediator of a fast response pathway to auxin involving proteins phosphorylation, and leading to rapid cellular responses including membrane depolarization and cytoplasmic streaming. Required for general growth and developmental process. The polypeptide is RAF-like serine/threonine-protein kinase 24 (Arabidopsis thaliana (Mouse-ear cress)).